We begin with the raw amino-acid sequence, 1165 residues long: Transient receptor potential cation channel subfamily M member 5 (1165 aa).

At 1–715 the chain is on the cytoplasmic side; that stretch reads MVEKSSERFD…LRRWNRFWSA (715 aa). S121 is subject to Phosphoserine. Residues E212, C324, D333, D336, and E337 each coordinate Ca(2+). A helical membrane pass occupies residues 716-740; sequence PVTVFMGNVIMYFAFLILFSYVLLL. The Extracellular portion of the chain corresponds to 741–751; sequence DFRPPPPYGPS. A helical membrane pass occupies residues 752–771; the sequence is AAEIILYFWVFTLVLEEIRQ. E768 and Q771 together coordinate Ca(2+). The Cytoplasmic segment spans residues 772–792; sequence SFFTDEDMSILKKMKLYVEDN. Residues 793–811 form a helical membrane-spanning segment; that stretch reads WNKCDMVAISLFVVGLSCR. The Ca(2+) site is built by N794 and D797. Over 812 to 818 the chain is Extracellular; sequence MAMSTYE. A helical membrane pass occupies residues 819–841; the sequence is AGRTVLALDFMVFTLRLIHIFAI. Residues 842-850 lie on the Cytoplasmic side of the membrane; the sequence is HKQLGPKII. Residues 851–880 form a helical membrane-spanning segment; sequence IVERMIKDVFFFLFFLSVWLIAYGVTTQAL. Topologically, residues 881-889 are extracellular; that stretch reads LHPNDPRID. Residues 890–930 constitute an intramembrane region (pore-forming); it reads WVFRRALYRPYLHIFGQIPLEEIDAAKMPDDNCTTDVQEII. A Selectivity filter motif is present at residues 904–906; it reads FGQ. Residues 931–942 are Extracellular-facing; the sequence is LGTLPPCPNIYA. A helical transmembrane segment spans residues 943–977; it reads NWLVILLLVIYLLVTNVLLLNLLIAMFSYTFQVVQ. Residues 978–1165 lie on the Cytoplasmic side of the membrane; sequence ENADIFWKFQ…TDKKLPFIDH (188 aa). E994 is a Ca(2+) binding site. Positions 1122–1165 are disordered; that stretch reads RDAPKAPRSIAGSSRDQQPQGAKRQQPAGHPAYGTDKKLPFIDH. The segment covering 1132 to 1141 has biased composition (polar residues); it reads AGSSRDQQPQ. Residues 1156–1165 are compositionally biased toward basic and acidic residues; the sequence is TDKKLPFIDH.

Belongs to the transient receptor (TC 1.A.4) family. LTrpC subfamily. TRPM5 sub-subfamily. In terms of assembly, homotetramer.

It localises to the cell membrane. The enzyme catalyses Na(+)(in) = Na(+)(out). The catalysed reaction is K(+)(in) = K(+)(out). With respect to regulation, ca(2+)-activated cation channel. Displays voltage dependence modulation. Regulated by PI(4,5)P2 levels. PI(4,5)P 2 reverses the Ca(2+) -induced desensitization of channels. Is highly temperature-sensitive. Its function is as follows. Monovalent cation-selective ion channel activated by intracellular Ca(2+) in a voltage- and temperature-dependent manner. Mediates the transport of Na(+), K(+) and Cs(+) ions equally well. Activated directly by increase in intracellular Ca(2+), but is impermeable to it. The activation mechanism of TRPM5 involves a multistep process. TRPM5 activation involves ligand binding (i.e., tastant molecule, glucose stimulation) to Gq/G-protein coupled receptors (GPCR) and leads to the breakdown of phosphatidylinositol bisphosphate (PIP2) into diacylglycerol (DAG) and inositol trisphosphate (IP3), IP3 binds to its receptors in the endoplasmic reticulum and cause Ca(2+) release. Simultaneously with the intracellular Ca(2+) release, DAG activates the protein kinase C (PKC), which phosphorylates the TRPM5 channel. This phosphorylation combined with the bound Ca(2+), leads to a robust inward current allowing the entry of sodium ions (Na+) into the cell. This ion influx depolarizes the cell membrane, generating action potentials that propagate TRPM5 signals. The sequence is that of Transient receptor potential cation channel subfamily M member 5 from Danio rerio (Zebrafish).